The following is a 460-amino-acid chain: Diguanylate cyclase DosC (460 aa).

His98 is a heme binding site. In terms of domain architecture, GGDEF spans Thr325–Ala458. Asp333 contributes to the Mg(2+) binding site. Positions 341 and 350 each coordinate substrate. Residue Asp376 participates in Mg(2+) binding. The Proton acceptor role is filled by Asp376.

Requires heme as cofactor. The cofactor is Mg(2+).

It catalyses the reaction 2 GTP = 3',3'-c-di-GMP + 2 diphosphate. It functions in the pathway purine metabolism; 3',5'-cyclic di-GMP biosynthesis. Globin-coupled heme-based oxygen sensor protein displaying diguanylate cyclase (DGC) activity in response to oxygen availability. Thus, catalyzes the synthesis of cyclic diguanylate (c-di-GMP) via the condensation of 2 GTP molecules. Cyclic-di-GMP is a second messenger which controls cell surface-associated traits in bacteria. The chain is Diguanylate cyclase DosC (dosC) from Escherichia coli O157:H7.